The primary structure comprises 221 residues: UPF0502 protein VSAL_II0605 (221 aa).

It belongs to the UPF0502 family.

The polypeptide is UPF0502 protein VSAL_II0605 (Aliivibrio salmonicida (strain LFI1238) (Vibrio salmonicida (strain LFI1238))).